We begin with the raw amino-acid sequence, 405 residues long: S-adenosylmethionine synthase (405 aa).

Position 139 to 144 (139 to 144 (GQGSVD)) interacts with ATP.

The protein belongs to the AdoMet synthase 2 family. The cofactor is Mg(2+).

The catalysed reaction is L-methionine + ATP + H2O = S-adenosyl-L-methionine + phosphate + diphosphate. Its pathway is amino-acid biosynthesis; S-adenosyl-L-methionine biosynthesis; S-adenosyl-L-methionine from L-methionine: step 1/1. In terms of biological role, catalyzes the formation of S-adenosylmethionine from methionine and ATP. In Thermococcus onnurineus (strain NA1), this protein is S-adenosylmethionine synthase.